The following is an 81-amino-acid chain: Delta-actitoxin-Aeq2d (81 aa).

Residues 1 to 19 (MNRLMILVFAAVILALASA) form the signal peptide. A propeptide spanning residues 20–25 (DDVDIA) is cleaved from the precursor. 3 cysteine pairs are disulfide-bonded: Cys-31/Cys-78, Cys-33/Cys-68, and Cys-61/Cys-79.

Belongs to the sea anemone sodium channel inhibitory toxin family. Type I subfamily.

It is found in the secreted. Its subcellular location is the nematocyst. In terms of biological role, binds specifically to voltage-gated sodium channels (Nav), thereby delaying their inactivation during signal transduction. Causes death to crabs. This is Delta-actitoxin-Aeq2d from Actinia equina (Beadlet anemone).